We begin with the raw amino-acid sequence, 505 residues long: Glutamyl-tRNA(Gln) amidotransferase subunit A, mitochondrial (505 aa).

Active-site charge relay system residues include lysine 76 and serine 158. The active-site Acyl-ester intermediate is the serine 182.

This sequence belongs to the amidase family. GatA subfamily. As to quaternary structure, subunit of the heterotrimeric GatCAB amidotransferase (AdT) complex, composed of A, B and C subunits.

It is found in the mitochondrion. It catalyses the reaction L-glutamyl-tRNA(Gln) + L-glutamine + ATP + H2O = L-glutaminyl-tRNA(Gln) + L-glutamate + ADP + phosphate + H(+). Allows the formation of correctly charged Gln-tRNA(Gln) through the transamidation of misacylated Glu-tRNA(Gln) in the mitochondria. The reaction takes place in the presence of glutamine and ATP through an activated gamma-phospho-Glu-tRNA(Gln). The sequence is that of Glutamyl-tRNA(Gln) amidotransferase subunit A, mitochondrial from Ixodes scapularis (Black-legged tick).